Consider the following 1020-residue polypeptide: LLGL scribble cell polarity complex component 2 (1020 aa).

14 WD repeats span residues 36-69 (SALG…FMGL), 76-117 (VTQI…DESF), 132-169 (ITVV…DRTI), 193-227 (ALQE…LYHF), 233-268 (LENI…QPEP), 282-324 (AITR…GQQT), 332-366 (VIGF…VIDL), 388-464 (TCSH…YKLS), 508-583 (QKIF…FVLV), 592-653 (TSLA…LRQS), 713-769 (VRTL…KEIQ), 778-830 (GILV…VSAK), 835-888 (LTAL…VRYS), and 902-925 (VFTK…SLST). Residue S653 is modified to Phosphoserine. Residues 653 to 669 (SFRRMRRSRVSSRKRHP) show a composition bias toward basic residues. The disordered stretch occupies residues 653–689 (SFRRMRRSRVSSRKRHPAGPPGEAQEGSAKAERPGLQ). Disordered stretches follow at residues 938–975 (AETK…PGLV) and 992–1020 (STLE…GGAE). A phosphoserine mark is found at S965 and S1015.

The protein belongs to the WD repeat L(2)GL family. Interacts with GPSM2/LGN, PRKCI/aPKC and PARD6B/Par-6. The complex is enhanced during mitosis. Interacts with DCAF1. Post-translationally, phosphorylated at Ser-653 by PRKCI. Phosphorylation is enhanced during cell polarization induced by calcium. Phosphorylation may occur during the cell-cell contact-induced cell polarization and may contribute to the segregation of LLGL2 from the PRKCI/aPKC and PARD6B/Par-6 complex.

It is found in the cytoplasm. Its function is as follows. Part of a complex with GPSM2/LGN, PRKCI/aPKC and PARD6B/Par-6, which may ensure the correct organization and orientation of bipolar spindles for normal cell division. This complex plays roles in the initial phase of the establishment of epithelial cell polarity. This chain is LLGL scribble cell polarity complex component 2 (LLGL2), found in Homo sapiens (Human).